We begin with the raw amino-acid sequence, 475 residues long: Sensor histidine kinase GlrK (475 aa).

Residues Met1–Gln13 are Cytoplasmic-facing. Residues Leu14 to Trp34 traverse the membrane as a helical segment. At Gln35–Gln173 the chain is on the periplasmic side. A helical transmembrane segment spans residues Tyr174–Thr194. Over Arg195 to Lys475 the chain is Cytoplasmic. One can recognise a Histidine kinase domain in the interval His256–Lys472. Residue His259 is modified to Phosphohistidine; by autocatalysis.

Post-translationally, autophosphorylated.

It is found in the cell inner membrane. The enzyme catalyses ATP + protein L-histidine = ADP + protein N-phospho-L-histidine.. Functionally, member of the two-component regulatory system GlrR/GlrK that up-regulates transcription of the glmY sRNA when cells enter the stationary growth phase. Activates GlrR by phosphorylation. In Escherichia coli (strain K12), this protein is Sensor histidine kinase GlrK (glrK).